The primary structure comprises 234 residues: Proteasome subunit alpha type-2 (234 aa).

The residue at position 2 (A2) is an N-acetylalanine. At Y6 the chain carries Phosphotyrosine. S7, S14, and S16 each carry phosphoserine. A Phosphotyrosine modification is found at Y24. K70 carries the post-translational modification N6-acetyllysine. A phosphotyrosine mark is found at Y76 and Y121. K171 carries the N6-acetyllysine modification.

It belongs to the peptidase T1A family. In terms of assembly, the 26S proteasome consists of a 20S proteasome core and two 19S regulatory subunits. The 20S proteasome core is a barrel-shaped complex made of 28 subunits that are arranged in four stacked rings. The two outer rings are each formed by seven alpha subunits, and the two inner rings are formed by seven beta subunits. The proteolytic activity is exerted by three beta-subunits PSMB5, PSMB6 and PSMB7. In terms of processing, phosphorylated on tyrosine residues; which may be important for nuclear import. In terms of tissue distribution, detected in liver (at protein level).

It is found in the cytoplasm. Its subcellular location is the nucleus. Its function is as follows. Component of the 20S core proteasome complex involved in the proteolytic degradation of most intracellular proteins. This complex plays numerous essential roles within the cell by associating with different regulatory particles. Associated with two 19S regulatory particles, forms the 26S proteasome and thus participates in the ATP-dependent degradation of ubiquitinated proteins. The 26S proteasome plays a key role in the maintenance of protein homeostasis by removing misfolded or damaged proteins that could impair cellular functions, and by removing proteins whose functions are no longer required. Associated with the PA200 or PA28, the 20S proteasome mediates ubiquitin-independent protein degradation. This type of proteolysis is required in several pathways including spermatogenesis (20S-PA200 complex) or generation of a subset of MHC class I-presented antigenic peptides (20S-PA28 complex). This chain is Proteasome subunit alpha type-2 (Psma2), found in Mus musculus (Mouse).